We begin with the raw amino-acid sequence, 315 residues long: Protein ADP-ribosyltransferase (315 aa).

In terms of domain architecture, Deacetylase sirtuin-type spans 13–299; sequence LMDEKTKQAE…TTALRNDSTT (287 aa). Residues Ala40, 123-126, and Gln143 contribute to the NAD(+) site; that span reads TNAD. Zn(2+)-binding residues include Cys151, Cys155, Cys186, and Cys189. Residues 238 to 240, Asn264, Tyr268, and Ile285 contribute to the NAD(+) site; that span reads YTT.

Belongs to the sirtuin family. Class M subfamily. Requires Zn(2+) as cofactor.

The catalysed reaction is L-aspartyl-[protein] + NAD(+) = 4-O-(ADP-D-ribosyl)-L-aspartyl-[protein] + nicotinamide. Its activity is regulated as follows. Is inhibited by Tenovin-6 in vitro, but not by nicotinamide. In terms of biological role, catalyzes specifically the mono-ADP-ribosylation of GcvH-L (SAV0324). This activity is dependent on prior lipoylation of the target protein. May be involved in the modulation of the response to host-derived oxidative stress. In contrast to other sirtuin classes, lacks protein deacylase activity, being unable to catalyze delipoylation, debiotinylation, deacetylation and desuccinylation of proteins. The polypeptide is Protein ADP-ribosyltransferase (Staphylococcus aureus (strain Mu50 / ATCC 700699)).